The primary structure comprises 131 residues: Single-stranded DNA-binding protein 2 (131 aa).

Positions 1-103 constitute an SSB domain; that stretch reads MYNKVIMIGR…VLASSFQLLE (103 aa). The Important for interaction with partner proteins signature appears at 126 to 131; that stretch reads EEELPF.

Homotetramer.

Its function is as follows. Plays an important role in DNA replication, recombination and repair. Binds to ssDNA and to an array of partner proteins to recruit them to their sites of action during DNA metabolism. This Streptococcus agalactiae serotype III (strain NEM316) protein is Single-stranded DNA-binding protein 2 (ssb2).